The primary structure comprises 546 residues: Src substrate cortactin (546 aa).

Residues 1–28 are disordered; sequence MWKASAGHAVSITQDDGGADDWETDPDF. Over residues 17–28 the composition is skewed to acidic residues; the sequence is GGADDWETDPDF. Cortactin repeat units lie at residues 80–116, 117–153, 154–190, 191–227, 228–264, and 265–301; these read ASHG…SQVD, SVRG…SQKD, YSSG…SQKD, YSKG…SQKD, YVKG…SQKD, and YKTG…SQQD. Residues lysine 87 and lysine 107 each carry the N6-acetyllysine modification. Serine 113 is subject to Phosphoserine. Residue arginine 119 is modified to Omega-N-methylarginine. Lysine 124 is subject to N6-acetyllysine. Lysine 144 carries the post-translational modification N6-acetyllysine; alternate. A Glycyl lysine isopeptide (Lys-Gly) (interchain with G-Cter in SUMO1); alternate cross-link involves residue lysine 144. Lysine 144 participates in a covalent cross-link: Glycyl lysine isopeptide (Lys-Gly) (interchain with G-Cter in SUMO2); alternate. At serine 150 the chain carries Phosphoserine. Lysine 152, lysine 161, and lysine 171 each carry N6-acetyllysine. Residue lysine 181 is modified to N6-acetyllysine; alternate. A Glycyl lysine isopeptide (Lys-Gly) (interchain with G-Cter in SUMO1); alternate cross-link involves residue lysine 181. Residue lysine 181 forms a Glycyl lysine isopeptide (Lys-Gly) (interchain with G-Cter in SUMO2); alternate linkage. N6-acetyllysine is present on residues lysine 193 and lysine 198. Residue lysine 218 forms a Glycyl lysine isopeptide (Lys-Gly) (interchain with G-Cter in SUMO1) linkage. Lysine 235 carries the N6-acetyllysine modification. Residue serine 261 is modified to Phosphoserine. N6-acetyllysine is present on lysine 272. Lysine 295 bears the N6-acetyllysine; alternate mark. Lysine 295 is covalently cross-linked (Glycyl lysine isopeptide (Lys-Gly) (interchain with G-Cter in SUMO2); alternate). Residues 302 to 324 form a Cortactin 7; truncated repeat; sequence YAKGFGGKYGVQKDRMDKNASTF. An N6-acetyllysine mark is found at lysine 304, lysine 309, lysine 314, and lysine 346. Residues 348–401 adopt a coiled-coil conformation; sequence SNIRANFENLAKEREQEDRRKAEAERAQRMAKERQEQEEARRKLEEQARAKKQT. A disordered region spans residues 355–424; that stretch reads ENLAKEREQE…PPSSPIYEDA (70 aa). Basic and acidic residues predominate over residues 357–396; that stretch reads LAKEREQEDRRKAEAERAQRMAKERQEQEEARRKLEEQAR. Residue threonine 401 is modified to Phosphothreonine. Phosphoserine occurs at positions 405, 407, 417, and 418. Phosphotyrosine occurs at positions 421 and 442. Serine 443 is modified (phosphoserine). The residue at position 466 (tyrosine 466) is a Phosphotyrosine; by FAK1. Residues tyrosine 482 and tyrosine 485 each carry the phosphotyrosine; by SRC modification. One can recognise an SH3 domain in the interval 488 to 546; that stretch reads DLGITAIALYDYQAAGDDEISFDPDDIITNIEMIDDGWWRGVCKGRYGLFPANYVELRQ.

In terms of assembly, part of a complex composed of NEDD9, AURKA and CTTN; within the complex NEDD9 acts as a scaffold protein and is required for complex formation. Interacts (via N-terminus) with NEDD9. Identified in a complex containing FGFR4, NCAM1, CDH2, PLCG1, FRS2, SRC, SHC1, GAP43 and CTTN. Forms a complex with ABL1 and MYLK. Interacts with SHANK2 and SHANK3 (via its SH3 domain). Interacts with PLXDC2 and SRCIN1. Interacts with SAMSN1 (via SH3 domain). Interacts (via SH3 domain) with ASAP1 (via Pro-rich region). Interacts (via SH3 domain) with DNM2. Interacts with ACTN1. Interacts with FER. Interacts with KCNA2 (via non-phosphorylated C-terminus). Interacts with FGD1. Interacts with ABL2. Interacts with CTTNBP2NL; this interaction may target CTTN to stress fibers. Interacts with CTTNBP2; this interaction may target CTTN at the cell cortex or dendritic spines. Interacts with KCNH1. Interacts (via SH3 domain) with DIP2A (via N-terminus); the interaction enhances CTTN acetylation and is required for proper synaptic transmission. Interacts with XIRP1 (via N-terminus); the interaction promotes CTTN localization to intercalated disks in cardiomyocytes. Post-translationally, acetylated. In terms of processing, phosphorylated by FER. Phosphorylated in response to FGR activation. Phosphorylation by SRC promotes MYLK binding. Phosphorylated on tyrosine residues in response to CHRM1 activation. Phosphorylated by PTK2/FAK1 in response to cell adhesion. Tyrosine phosphorylation in transformed cells may contribute to cellular growth regulation and transformation. Phosphorylated by PKN2 at both serine and threonine residues in a GTP-bound Rac1-dependent manner in hyaluronan-induced astrocytes and hence down-regulated CTTN ability to associate with filamentous actin. Expressed at intercalated disks in the heart (at protein level). Expressed in most tissues, except in B-lymphocytes or plasma cells.

The protein resides in the cytoplasm. Its subcellular location is the cytoskeleton. It localises to the cell projection. The protein localises to the lamellipodium. It is found in the ruffle. The protein resides in the dendrite. Its subcellular location is the cell membrane. It localises to the podosome. The protein localises to the cell junction. It is found in the focal adhesion. The protein resides in the membrane. Its subcellular location is the clathrin-coated pit. It localises to the dendritic spine. The protein localises to the cell cortex. It is found in the endoplasmic reticulum. Functionally, contributes to the organization of the actin cytoskeleton and cell shape. Plays a role in the formation of lamellipodia and in cell migration. Plays a role in the regulation of neuron morphology, axon growth and formation of neuronal growth cones. Through its interaction with CTTNBP2, involved in the regulation of neuronal spine density. Plays a role in focal adhesion assembly and turnover. In complex with ABL1 and MYLK regulates cortical actin-based cytoskeletal rearrangement critical to sphingosine 1-phosphate (S1P)-mediated endothelial cell (EC) barrier enhancement. Plays a role in intracellular protein transport and endocytosis, and in modulating the levels of potassium channels present at the cell membrane. Plays a role in receptor-mediated endocytosis via clathrin-coated pits. Required for stabilization of KCNH1 channels at the cell membrane. The protein is Src substrate cortactin (Cttn) of Mus musculus (Mouse).